Here is a 742-residue protein sequence, read N- to C-terminus: Mechanosensitive ion channel protein 9 (742 aa).

A disordered region spans residues 1-117 (MAERRVSNGE…REENGGRSLR (117 aa)). Residues 17 to 26 (SDKEDSKDPR) are compositionally biased toward basic and acidic residues. Phosphoserine is present on residues serine 28 and serine 36. The span at 105-117 (DSTREENGGRSLR) shows a compositional bias: basic and acidic residues. A phosphoserine mark is found at serine 142 and serine 145. The next 6 membrane-spanning stretches (helical) occupy residues 180 to 200 (AFLE…SLTI), 221 to 241 (MVTL…VFII), 261 to 281 (NVQV…LFDG), 292 to 312 (FLDF…LFLV), 524 to 544 (LITG…LDIA), and 559 to 579 (LAFM…FVFV).

This sequence belongs to the MscS (TC 1.A.23) family. As to expression, detected in the epidermis, cortex, and endodermis of the root tip.

The protein resides in the cell membrane. Mechanosensitive channel that opens in response to stretch forces in the membrane lipid bilayer. This chain is Mechanosensitive ion channel protein 9 (MSL9), found in Arabidopsis thaliana (Mouse-ear cress).